We begin with the raw amino-acid sequence, 235 residues long: MNFKEGEVLYFDKPLKWTSFAVVNKIRYHICRKLGVKKIKVGHAGTLDPLATGVMIICTGKATKRIEEFQYHTKEYIATLQLGATTPSFDLEKEIDATYPTEHITRELVEEALQRFIGRIEQIPPVFSACKVDGKRAYDLARKGEDVELKAKTLIIDEIELLECNLPEIKIRVVCSKGTYIRALARDIGEALNSGAHLTGLIRTRVGDVRLEDCLSVESFPEWLDQQEIEEVINE.

The active-site Nucleophile is the D48.

The protein belongs to the pseudouridine synthase TruB family. Type 1 subfamily.

The catalysed reaction is uridine(55) in tRNA = pseudouridine(55) in tRNA. Functionally, responsible for synthesis of pseudouridine from uracil-55 in the psi GC loop of transfer RNAs. The polypeptide is tRNA pseudouridine synthase B (Phocaeicola vulgatus (strain ATCC 8482 / DSM 1447 / JCM 5826 / CCUG 4940 / NBRC 14291 / NCTC 11154) (Bacteroides vulgatus)).